A 256-amino-acid polypeptide reads, in one-letter code: 5-keto-4-deoxy-D-glucarate aldolase (256 aa).

The Proton acceptor role is filled by H50. Position 151 (Q151) interacts with substrate. E153 is a Mg(2+) binding site. The substrate site is built by S178 and D179. D179 provides a ligand contact to Mg(2+).

The protein belongs to the HpcH/HpaI aldolase family. KDGluc aldolase subfamily. In terms of assembly, homohexamer; trimer of dimers. The cofactor is Mg(2+).

It catalyses the reaction 5-dehydro-4-deoxy-D-glucarate = 2-hydroxy-3-oxopropanoate + pyruvate. The catalysed reaction is 2-dehydro-3-deoxy-D-glucarate = 2-hydroxy-3-oxopropanoate + pyruvate. The protein operates within carbohydrate acid metabolism; galactarate degradation; D-glycerate from galactarate: step 2/3. Functionally, catalyzes the reversible retro-aldol cleavage of both 5-keto-4-deoxy-D-glucarate and 2-keto-3-deoxy-D-glucarate to pyruvate and tartronic semialdehyde. The protein is 5-keto-4-deoxy-D-glucarate aldolase of Shigella sonnei (strain Ss046).